The following is a 624-amino-acid chain: Probable pectinesterase/pectinesterase inhibitor 47 (624 aa).

The N-terminal stretch at 1 to 19 (MQTHSSSLVFLALLCLSWA) is a signal peptide. Residues 24–88 (PTRPPSQPPS…PSPLPPNIAC (65 aa)) are disordered. Residues 25–84 (TRPPSQPPSHPPIQPSSQPPTQPPSQPPTQPPTQPPSHPPTQPPTPPPSQSPSQPSPLPP) are compositionally biased toward pro residues. Residues 74–236 (QSPSQPSPLP…TRLYSVSLGL (163 aa)) form a pectinesterase inhibitor 47 region. N-linked (GlcNAc...) asparagine glycans are attached at residues Asn-225, Asn-330, Asn-369, and Asn-376. Residues 307–606 (AVTVGPYETD…FTVYNFTLGD (300 aa)) are pectinesterase 47. Thr-385 is a substrate binding site. Residue Asn-387 is glycosylated (N-linked (GlcNAc...) asparagine). Gln-415 is a substrate binding site. Residue Asp-438 is the Proton donor; for pectinesterase activity of the active site. A disulfide bridge connects residues Cys-452 and Cys-472. The Nucleophile; for pectinesterase activity role is filled by Asp-459. An N-linked (GlcNAc...) asparagine glycan is attached at Asn-505. Substrate contacts are provided by Arg-527 and Trp-529. Asn-555, Asn-596, and Asn-601 each carry an N-linked (GlcNAc...) asparagine glycan.

It in the N-terminal section; belongs to the PMEI family. In the C-terminal section; belongs to the pectinesterase family.

The protein resides in the secreted. It localises to the cell wall. The catalysed reaction is [(1-&gt;4)-alpha-D-galacturonosyl methyl ester](n) + n H2O = [(1-&gt;4)-alpha-D-galacturonosyl](n) + n methanol + n H(+). Its pathway is glycan metabolism; pectin degradation; 2-dehydro-3-deoxy-D-gluconate from pectin: step 1/5. In terms of biological role, acts in the modification of cell walls via demethylesterification of cell wall pectin. This is Probable pectinesterase/pectinesterase inhibitor 47 (PME47) from Arabidopsis thaliana (Mouse-ear cress).